Reading from the N-terminus, the 503-residue chain is Cytochrome P450 11B1, mitochondrial (503 aa).

A mitochondrion-targeting transit peptide spans 1–24; it reads MALRAKAEVCMAVPWLSLQRAQAL. A heme-binding site is contributed by Cys450.

The protein belongs to the cytochrome P450 family. Heme is required as a cofactor. Expressed in the zona fasciculata/reticularis of the adrenal cortex.

The protein localises to the mitochondrion inner membrane. It catalyses the reaction a steroid + 2 reduced [adrenodoxin] + O2 + 2 H(+) = an 11beta-hydroxysteroid + 2 oxidized [adrenodoxin] + H2O. It carries out the reaction 11-deoxycortisol + 2 reduced [adrenodoxin] + O2 + 2 H(+) = cortisol + 2 oxidized [adrenodoxin] + H2O. The catalysed reaction is 21-hydroxyprogesterone + 2 reduced [adrenodoxin] + O2 + 2 H(+) = corticosterone + 2 oxidized [adrenodoxin] + H2O. Its pathway is steroid biosynthesis; glucocorticoid biosynthesis. It functions in the pathway steroid hormone biosynthesis. In terms of biological role, a cytochrome P450 monooxygenase involved in the biosynthesis of adrenal corticoids. Catalyzes a variety of reactions that are essential for many species, including detoxification, defense, and the formation of endogenous chemicals like steroid hormones. Steroid 11beta, 18- and 19-hydroxylase with preferred regioselectivity at 11beta, then 18, and lastly 19. Catalyzes the hydroxylation of 11-deoxycortisol and 11-deoxycorticosterone (21-hydroxyprogesterone) at 11beta position, yielding cortisol or corticosterone, respectively, but cannot produce aldosterone. Mechanistically, uses molecular oxygen inserting one oxygen atom into a substrate for hydroxylation and reducing the second into a water molecule. Two electrons are provided by NADPH via a two-protein mitochondrial transfer system comprising flavoprotein FDXR (adrenodoxin/ferredoxin reductase) and nonheme iron-sulfur protein FDX1 or FDX2 (adrenodoxin/ferredoxin). Due to its lack of 18-oxidation activity, it is incapable of generating aldosterone. Could also be involved in the androgen metabolic pathway. The polypeptide is Cytochrome P450 11B1, mitochondrial (Homo sapiens (Human)).